Consider the following 208-residue polypeptide: Endo-1,4-beta-xylanase B (208 aa).

Residues 1–16 form the signal peptide; the sequence is MKVTAAFAGLLATTLA. One can recognise a GH11 domain in the interval 17-207; it reads APATELVTRS…GTGTASVTVS (191 aa). The active-site Nucleophile is glutamate 101. Glutamate 194 functions as the Proton donor in the catalytic mechanism.

This sequence belongs to the glycosyl hydrolase 11 (cellulase G) family.

The protein resides in the secreted. The enzyme catalyses Endohydrolysis of (1-&gt;4)-beta-D-xylosidic linkages in xylans.. It participates in glycan degradation; xylan degradation. With respect to regulation, N-bromosuccinimide completely inhibits the catalytic activity. Its function is as follows. Endo-1,4-beta-xylanase involved in the hydrolysis of xylan, a major structural heterogeneous polysaccharide found in plant biomass representing the second most abundant polysaccharide in the biosphere, after cellulose. The protein is Endo-1,4-beta-xylanase B (xynB) of Talaromyces purpureogenus (Soft rot fungus).